Reading from the N-terminus, the 398-residue chain is Odorant receptor 59b (398 aa).

The Cytoplasmic portion of the chain corresponds to 1–46 (MAVFKLIKPAPLTEKVQSRQGNIYLYRAMWLIGWIPPKEGVLRYVY). A helical transmembrane segment spans residues 47-67 (LFWTCVPFAFGVFYLPVGFII). At 68–84 (SYVQEFKNFTPGEFLTS) the chain is on the extracellular side. A helical transmembrane segment spans residues 85–105 (LQVCINVYGASVKSTITYLFL). Topologically, residues 106-141 (WRLRKTEILLDSLDKRLANDSDRERIHNMVARCNYA) are cytoplasmic. The chain crosses the membrane as a helical span at residues 142-162 (FLIYSFIYCGYAGSTFLSYAL). Residues 163-179 (SGRPPWSVYNPFIDWRD) are Extracellular-facing. A helical membrane pass occupies residues 180–200 (GMGSLWIQAIFEYITMSFAVL). Residues 201–269 (QDQLSDTYPL…DMIRPMISRT (69 aa)) are Cytoplasmic-facing. A helical transmembrane segment spans residues 270 to 290 (IFVQFALIGSVLGLTLVNVFF). Over 291–293 (FSN) the chain is Extracellular. Residues 294–314 (FWKGVASLLFVITILLQTFPF) traverse the membrane as a helical segment. The Cytoplasmic portion of the chain corresponds to 315-348 (CYTCNMLIDDAQDLSNEIFQSNWVDAEPRYKATL). Residues 349–369 (VLFMHHVQQPIIFIAGGIFPI) traverse the membrane as a helical segment. At 370-398 (SMNSNITVAKFAFSIITIVRQMNLAEQFQ) the chain is on the extracellular side. N374 carries an N-linked (GlcNAc...) asparagine glycan.

It belongs to the insect chemoreceptor superfamily. Heteromeric odorant receptor channel (TC 1.A.69) family. Or2a subfamily. Interacts with Orco. Complexes exist early in the endomembrane system in olfactory sensory neurons (OSNs), coupling these complexes to the conserved ciliary trafficking pathway. Expressed in olfactory sensory neurons in the antenna.

It localises to the cell membrane. Its function is as follows. Odorant receptor which mediates acceptance or avoidance behavior, depending on its substrates. The odorant receptor repertoire encodes a large collection of odor stimuli that vary widely in identity, intensity, and duration. Forms a complex with Orco to form odorant-sensing units, providing sensitive and prolonged odorant signaling and calcium permeability. Also plays a role in the response to N,N-Diethyl-meta-toluamide (DEET), the most widely used insect repellent worldwide. This chain is Odorant receptor 59b (Or59b), found in Drosophila melanogaster (Fruit fly).